Reading from the N-terminus, the 125-residue chain is Nascent polypeptide-associated complex protein (125 aa).

Positions 9–76 constitute an NAC-A/B domain; it reads PRMMKQMQKM…SKNTSKTAEK (68 aa).

Belongs to the NAC-alpha family. As to quaternary structure, homodimer. Interacts with the ribosome. Binds ribosomal RNA.

Functionally, contacts the emerging nascent chain on the ribosome. The sequence is that of Nascent polypeptide-associated complex protein from Methanococcus vannielii (strain ATCC 35089 / DSM 1224 / JCM 13029 / OCM 148 / SB).